Consider the following 318-residue polypeptide: MDKIEKSFGKGSIMKMGEEVVEQVEVIPTGSIALNAALGVGGYPRGRIIEIYGPESSGKTTLAIHAIAEAQKAGGIAAFIDAEHAFDRFYAAKLGVDVDNLFISQPDNGEQALEIAEQLIRSSAIDIIVVDSVAALTPKAEIEGDMGDNKVGLQARLMSQALRKLTSAVSKTRTTCIFINQLREKIGVMFGNPETTTGGNALKFYASVRLDIRGSQQIKDGEEVIGKQTKVKVVKNKVAPPFRKAEFDIMFGEGISHSGEIIDLGADLGIIKKSGSWYSYNDTKLGQGRDAAKQCIADNPELAEELEGLIFEKLREHK.

Residue 53–60 (GPESSGKT) coordinates ATP.

Belongs to the RecA family.

The protein localises to the cytoplasm. In terms of biological role, can catalyze the hydrolysis of ATP in the presence of single-stranded DNA, the ATP-dependent uptake of single-stranded DNA by duplex DNA, and the ATP-dependent hybridization of homologous single-stranded DNAs. It interacts with LexA causing its activation and leading to its autocatalytic cleavage. In Bacteroides fragilis (strain YCH46), this protein is Protein RecA.